The chain runs to 214 residues: uncharacterized protein (214 aa).

This is an uncharacterized protein from Rhodobacter capsulatus (Rhodopseudomonas capsulata).